Consider the following 105-residue polypeptide: Nucleoid-associated protein ABC0038 (105 aa).

Residues 1–22 (MEMKNMGNMMKQMQKMQKQMMK) show a composition bias toward low complexity. Positions 1-26 (MEMKNMGNMMKQMQKMQKQMMKAQEE) are disordered.

Belongs to the YbaB/EbfC family. Homodimer.

It is found in the cytoplasm. Its subcellular location is the nucleoid. Its function is as follows. Binds to DNA and alters its conformation. May be involved in regulation of gene expression, nucleoid organization and DNA protection. This is Nucleoid-associated protein ABC0038 from Shouchella clausii (strain KSM-K16) (Alkalihalobacillus clausii).